A 206-amino-acid chain; its full sequence is Guanylate kinase (206 aa).

The Guanylate kinase-like domain occupies 5–183 (FNLLILSGPS…SKEIILSIAK (179 aa)). Residue 12–19 (GPSGAGKS) participates in ATP binding.

The protein belongs to the guanylate kinase family.

It is found in the cytoplasm. It catalyses the reaction GMP + ATP = GDP + ADP. Functionally, essential for recycling GMP and indirectly, cGMP. The sequence is that of Guanylate kinase (gmk) from Helicobacter pylori (strain ATCC 700392 / 26695) (Campylobacter pylori).